A 268-amino-acid polypeptide reads, in one-letter code: Hydroxyethylthiazole kinase (268 aa).

A substrate-binding site is contributed by Met-45. 2 residues coordinate ATP: Arg-121 and Thr-167. Gly-194 serves as a coordination point for substrate.

It belongs to the Thz kinase family. It depends on Mg(2+) as a cofactor.

The enzyme catalyses 5-(2-hydroxyethyl)-4-methylthiazole + ATP = 4-methyl-5-(2-phosphooxyethyl)-thiazole + ADP + H(+). The protein operates within cofactor biosynthesis; thiamine diphosphate biosynthesis; 4-methyl-5-(2-phosphoethyl)-thiazole from 5-(2-hydroxyethyl)-4-methylthiazole: step 1/1. In terms of biological role, catalyzes the phosphorylation of the hydroxyl group of 4-methyl-5-beta-hydroxyethylthiazole (THZ). The polypeptide is Hydroxyethylthiazole kinase (Bacillus anthracis (strain A0248)).